We begin with the raw amino-acid sequence, 195 residues long: ATP-dependent Clp protease proteolytic subunit (195 aa).

Ser-98 functions as the Nucleophile in the catalytic mechanism. Residue His-123 is part of the active site.

It belongs to the peptidase S14 family. As to quaternary structure, fourteen ClpP subunits assemble into 2 heptameric rings which stack back to back to give a disk-like structure with a central cavity, resembling the structure of eukaryotic proteasomes.

Its subcellular location is the cytoplasm. The catalysed reaction is Hydrolysis of proteins to small peptides in the presence of ATP and magnesium. alpha-casein is the usual test substrate. In the absence of ATP, only oligopeptides shorter than five residues are hydrolyzed (such as succinyl-Leu-Tyr-|-NHMec, and Leu-Tyr-Leu-|-Tyr-Trp, in which cleavage of the -Tyr-|-Leu- and -Tyr-|-Trp bonds also occurs).. Cleaves peptides in various proteins in a process that requires ATP hydrolysis. Has a chymotrypsin-like activity. Plays a major role in the degradation of misfolded proteins. The sequence is that of ATP-dependent Clp protease proteolytic subunit from Wolinella succinogenes (strain ATCC 29543 / DSM 1740 / CCUG 13145 / JCM 31913 / LMG 7466 / NCTC 11488 / FDC 602W) (Vibrio succinogenes).